We begin with the raw amino-acid sequence, 455 residues long: Bifunctional protein GlmU (455 aa).

The pyrophosphorylase stretch occupies residues 1–226; sequence MGLSVVILAA…EFEILGVNDR (226 aa). UDP-N-acetyl-alpha-D-glucosamine contacts are provided by residues 8–11, Lys22, Gln73, 78–79, 99–101, Gly136, Glu151, Asn166, and Asn224; these read LAAG, GT, and YGD. Asp101 serves as a coordination point for Mg(2+). Asn224 provides a ligand contact to Mg(2+). Positions 227-247 are linker; that stretch reads TQLASLERVWQRNVAEKIMAK. Residues 248–455 form an N-acetyltransferase region; it reads GVSIADPNRF…WQRSVKKTDK (208 aa). UDP-N-acetyl-alpha-D-glucosamine-binding residues include Arg330 and Lys348. The Proton acceptor role is filled by His360. UDP-N-acetyl-alpha-D-glucosamine contacts are provided by Tyr363 and Asn374. Acetyl-CoA is bound by residues Ala377, 383–384, Ser402, Ala420, and Arg437; that span reads NY.

It in the N-terminal section; belongs to the N-acetylglucosamine-1-phosphate uridyltransferase family. This sequence in the C-terminal section; belongs to the transferase hexapeptide repeat family. In terms of assembly, homotrimer. Requires Mg(2+) as cofactor.

It is found in the cytoplasm. It carries out the reaction alpha-D-glucosamine 1-phosphate + acetyl-CoA = N-acetyl-alpha-D-glucosamine 1-phosphate + CoA + H(+). The enzyme catalyses N-acetyl-alpha-D-glucosamine 1-phosphate + UTP + H(+) = UDP-N-acetyl-alpha-D-glucosamine + diphosphate. Its pathway is nucleotide-sugar biosynthesis; UDP-N-acetyl-alpha-D-glucosamine biosynthesis; N-acetyl-alpha-D-glucosamine 1-phosphate from alpha-D-glucosamine 6-phosphate (route II): step 2/2. The protein operates within nucleotide-sugar biosynthesis; UDP-N-acetyl-alpha-D-glucosamine biosynthesis; UDP-N-acetyl-alpha-D-glucosamine from N-acetyl-alpha-D-glucosamine 1-phosphate: step 1/1. It participates in bacterial outer membrane biogenesis; LPS lipid A biosynthesis. Its function is as follows. Catalyzes the last two sequential reactions in the de novo biosynthetic pathway for UDP-N-acetylglucosamine (UDP-GlcNAc). The C-terminal domain catalyzes the transfer of acetyl group from acetyl coenzyme A to glucosamine-1-phosphate (GlcN-1-P) to produce N-acetylglucosamine-1-phosphate (GlcNAc-1-P), which is converted into UDP-GlcNAc by the transfer of uridine 5-monophosphate (from uridine 5-triphosphate), a reaction catalyzed by the N-terminal domain. The polypeptide is Bifunctional protein GlmU (Francisella tularensis subsp. holarctica (strain OSU18)).